A 122-amino-acid polypeptide reads, in one-letter code: Large ribosomal subunit protein uL14 (122 aa).

The protein belongs to the universal ribosomal protein uL14 family. As to quaternary structure, part of the 50S ribosomal subunit. Forms a cluster with proteins L3 and L19. In the 70S ribosome, L14 and L19 interact and together make contacts with the 16S rRNA in bridges B5 and B8.

Binds to 23S rRNA. Forms part of two intersubunit bridges in the 70S ribosome. This Shewanella amazonensis (strain ATCC BAA-1098 / SB2B) protein is Large ribosomal subunit protein uL14.